Reading from the N-terminus, the 218-residue chain is Thiopurine S-methyltransferase (218 aa).

Residues W10, L45, E66, and R123 each contribute to the S-adenosyl-L-methionine site.

Belongs to the class I-like SAM-binding methyltransferase superfamily. TPMT family.

The protein localises to the cytoplasm. The enzyme catalyses S-adenosyl-L-methionine + a thiopurine = S-adenosyl-L-homocysteine + a thiopurine S-methylether.. This Shewanella denitrificans (strain OS217 / ATCC BAA-1090 / DSM 15013) protein is Thiopurine S-methyltransferase.